The primary structure comprises 305 residues: Mas-related G-protein coupled receptor member A7 (305 aa).

Residues 1 to 17 (MDETSPRSIDIESLIPN) lie on the Extracellular side of the membrane. The chain crosses the membrane as a helical span at residues 18–38 (LMIIIFGLVGLTGNAIVLWLL). At 39 to 46 (GFCLHRNA) the chain is on the cytoplasmic side. A helical transmembrane segment spans residues 47-67 (FLVYILNLALADFLFLLCHFI). The Extracellular portion of the chain corresponds to 68 to 81 (NSAMFLLKVPIPNG). Residues 82–102 (IFVYCFYTIKMVLYITGLSML) traverse the membrane as a helical segment. Over 103-129 (SAISTERCLSVLCPIWYHCRRPEHTST) the chain is Cytoplasmic. A helical transmembrane segment spans residues 130–150 (VMCAVIWIFSVLICILKEYFC). Over 151–167 (DFFGTKLGNYYVCQASN) the chain is Extracellular. A helical membrane pass occupies residues 168-188 (FFMGAYLMFLFVVLCLSTLAL). At 189–211 (LARLFCGAEKMKFTRLFVTIMLT) the chain is on the cytoplasmic side. Residues 212–232 (ILVFLLCGLPWGFFWFLLIWI) form a helical membrane-spanning segment. The Extracellular portion of the chain corresponds to 233-244 (KGGFSVLDYRLY). A helical membrane pass occupies residues 245 to 265 (LASIVLTVVNSCANPIIYFFV). Over 266 to 305 (GSFRHRLKHQTLKMVLQSALQDTPETHENMVEMSRIKAEQ) the chain is Cytoplasmic.

The protein belongs to the G-protein coupled receptor 1 family. Mas subfamily. As to expression, expressed in a subset of sensory neurons that includes nociceptors. Expressed in the subclass of non-peptidergic sensory neurons that are IB4(+) and VR1(-).

The protein localises to the cell membrane. Its function is as follows. Orphan receptor. May be a receptor for RFamide-family neuropeptides such as NPFF and NPAF, which are analgesic in vivo. May regulate nociceptor function and/or development, including the sensation or modulation of pain. The chain is Mas-related G-protein coupled receptor member A7 (Mrgpra7) from Mus musculus (Mouse).